A 71-amino-acid chain; its full sequence is Small ribosomal subunit protein bS21 (71 aa).

The protein belongs to the bacterial ribosomal protein bS21 family.

The sequence is that of Small ribosomal subunit protein bS21 from Vesicomyosocius okutanii subsp. Calyptogena okutanii (strain HA).